A 192-amino-acid chain; its full sequence is ADP-ribosylation factor-like protein 14 (192 aa).

G2 carries N-myristoyl glycine lipidation. GTP-binding positions include 20-27 (GLDSAGKS), 64-68 (DVGGQ), and 124-127 (NKQD).

It belongs to the small GTPase superfamily. Arf family. Interacts with ARL14EP.

It localises to the cytoplasmic vesicle. GTPase that recruits MYO1E to MHC class II-containing vesicles via the effector protein ARL14EP and hence controls the movement of these vesicles along the actin cytoskeleton in dendritic cells. This Mus musculus (Mouse) protein is ADP-ribosylation factor-like protein 14 (Arl14).